Reading from the N-terminus, the 183-residue chain is Oleosin 5 (183 aa).

Residues 1 to 39 (MADVRTHSHQLQVHPQRQHEGGIKVLYPQSGPSSTQVLA) form a polar region. The next 3 helical transmembrane spans lie at 37–57 (VLAVFVGVPIGGTLLTIAGLT), 66–86 (MLAFPLFLIFSPVIVPAAFVI), and 87–107 (GLAMTGFLASGAIGLTGLSSM). The hydrophobic stretch occupies residues 40 to 113 (VFVGVPIGGT…LSSMSWVLNY (74 aa)). Positions 144–183 (KDAGQTIEDKAHDVREAKTFDVRDRDTTKGTHNVRDTKTT) are disordered.

The protein belongs to the oleosin family.

Its subcellular location is the lipid droplet. It localises to the membrane. Its function is as follows. May have a structural role to stabilize the lipid body during desiccation of the seed by preventing coalescence of the oil. Probably interacts with both lipid and phospholipid moieties of lipid bodies. May also provide recognition signals for specific lipase anchorage in lipolysis during seedling growth. The protein is Oleosin 5 of Arabidopsis thaliana (Mouse-ear cress).